Here is a 319-residue protein sequence, read N- to C-terminus: ATP-dependent 6-phosphofructokinase (319 aa).

Glycine 11 lines the ATP pocket. 21-25 is a binding site for ADP; it reads RAVVR. ATP-binding positions include 72–73 and 102–105; these read RY and GDGS. Aspartate 103 is a binding site for Mg(2+). 125–127 contributes to the substrate binding site; it reads TID. The active-site Proton acceptor is the aspartate 127. Arginine 154 is an ADP binding site. Substrate is bound by residues arginine 162 and 169–171; that span reads MGR. ADP contacts are provided by residues 185–187, arginine 211, and 213–215; these read GAE and KKH. Substrate is bound by residues glutamate 222, arginine 243, and 249–252; that span reads HVQR.

This sequence belongs to the phosphofructokinase type A (PFKA) family. ATP-dependent PFK group I subfamily. Prokaryotic clade 'B1' sub-subfamily. As to quaternary structure, homotetramer. It depends on Mg(2+) as a cofactor.

It is found in the cytoplasm. It carries out the reaction beta-D-fructose 6-phosphate + ATP = beta-D-fructose 1,6-bisphosphate + ADP + H(+). It participates in carbohydrate degradation; glycolysis; D-glyceraldehyde 3-phosphate and glycerone phosphate from D-glucose: step 3/4. With respect to regulation, allosterically activated by ADP and other diphosphonucleosides, and allosterically inhibited by phosphoenolpyruvate. Its function is as follows. Catalyzes the phosphorylation of D-fructose 6-phosphate to fructose 1,6-bisphosphate by ATP, the first committing step of glycolysis. This chain is ATP-dependent 6-phosphofructokinase, found in Listeria monocytogenes serotype 4a (strain HCC23).